The following is a 214-amino-acid chain: MKKILVTGFDPFGGEKINPALEVIKLLPKKIGENEIKILEIPTVYKKSIEKIDKEIESYDPDYILSIGQAGGRTDISIERIAINIDDFRIKDNEGNQPIDEKIYLDGDNAYFSTLPIKAIQSEITKNGIPASISNTAGTFVCNHVFYGVRYLIEKKYKGKKSGFIHIPYLPEQIIGKADTPSMSLDNILKGITIAIEIIFSVENDIKKLGGSIC.

Catalysis depends on residues Glu-79, Cys-142, and His-166.

This sequence belongs to the peptidase C15 family. In terms of assembly, homotetramer.

The protein resides in the cytoplasm. It catalyses the reaction Release of an N-terminal pyroglutamyl group from a polypeptide, the second amino acid generally not being Pro.. In terms of biological role, removes 5-oxoproline from various penultimate amino acid residues except L-proline. In Fusobacterium nucleatum subsp. nucleatum (strain ATCC 25586 / DSM 15643 / BCRC 10681 / CIP 101130 / JCM 8532 / KCTC 2640 / LMG 13131 / VPI 4355), this protein is Pyrrolidone-carboxylate peptidase.